The following is an 89-amino-acid chain: Luqin-like RYamide peptides lury-1 (89 aa).

The N-terminal stretch at 1 to 19 (MLTRVPVLILAVIVMLALC) is a signal peptide. Residues 20-26 (QEPEKPE) constitute a propeptide that is removed on maturation. Tyrosine amide occurs at positions 35 and 43. The propeptide occupies 47–89 (SGNLMESSQNSLTEESSDVVCQLIDGKYICLPVDAVRFRPFFL).

In terms of tissue distribution, expressed in the M1 and M2 pharyngeal neurons from where the LURY-1-1 and LURY-1-2 peptides are secreted.

It is found in the secreted. Its function is as follows. Acts as a ligand for the npr-22 receptor and controls food-related processes including feeding, lifespan, egg-laying and roaming behavior. Secreted in the presence of food, leading to reduced feeding and roaming behavior and increased egg laying and lifespan. Activity may be latent under normal conditions but induced under conditions that cause hyperactivation of the pharynx such as abrupt refeeding after starvation. In Caenorhabditis elegans, this protein is Luqin-like RYamide peptides lury-1.